The sequence spans 708 residues: Leucine-rich repeat neuronal protein 3 (708 aa).

A signal peptide spans 1 to 22 (MKDMPLRIHVLLGLAITTLVQA). In terms of domain architecture, LRRNT spans 23–69 (VDKKVDCPRLCTCEIRPWFTPRSIYMEASTVDCNDLGLLTFPARLPA). Over 23–628 (VDKKVDCPRL…KEYEKNNTTT (606 aa)) the chain is Extracellular. LRR repeat units lie at residues 70–91 (NTQI…TDFP), 93–114 (NLTG…NVKK), 117–138 (QLLS…CLSE), 141–162 (NLQE…AFIG), 165–186 (NLLR…WFDA), 189–210 (NLEI…NFKP), 213–234 (NLRS…ALVG), 237–258 (NLES…ALQK), 261–282 (NLKF…DFSN), 285–304 (HLKE…DSLA), 310–332 (DLRK…AFFR), and 335–358 (KLES…ESLP). 2 N-linked (GlcNAc...) asparagine glycosylation sites follow: asparagine 93 and asparagine 103. Asparagine 223 carries N-linked (GlcNAc...) asparagine glycosylation. Residues 368-421 (NPIRCDCVIRWMNMNKTNIRFMEPDSLFCVDPPEFQGQNVRQVHFRDMMEICLP) form the LRRCT domain. Residue asparagine 382 is glycosylated (N-linked (GlcNAc...) asparagine). The Ig-like C2-type domain occupies 421 to 514 (PLIAPESFPS…DLKSVMIKVD (94 aa)). Residues cysteine 444 and cysteine 496 are joined by a disulfide bond. N-linked (GlcNAc...) asparagine glycosylation is found at asparagine 522, asparagine 579, asparagine 608, asparagine 624, and asparagine 625. A Fibronectin type-III domain is found at 523 to 617 (GSLNIKIRDI…NVTTKGLHPD (95 aa)). The chain crosses the membrane as a helical span at residues 629–649 (LMACLGGLLGIIGVICLISCL). The Cytoplasmic segment spans residues 650 to 708 (SPEMNCDGGHSYVRNYLQKPTFALGELYPPLINLWEAGKEKSTSLKVKATVIGLPTNMS).

Its subcellular location is the membrane. In Homo sapiens (Human), this protein is Leucine-rich repeat neuronal protein 3 (LRRN3).